A 79-amino-acid polypeptide reads, in one-letter code: uncharacterized protein (79 aa).

It belongs to the asfivirus D79L family.

This is an uncharacterized protein from African swine fever virus (isolate Tick/South Africa/Pretoriuskop Pr4/1996) (ASFV).